A 130-amino-acid chain; its full sequence is Small ribosomal subunit protein uS9 (130 aa).

This sequence belongs to the universal ribosomal protein uS9 family.

This Xylella fastidiosa (strain 9a5c) protein is Small ribosomal subunit protein uS9.